Here is a 63-residue protein sequence, read N- to C-terminus: Large ribosomal subunit protein bL35 (63 aa).

The span at 1-43 (MKMRTHSGAKKRLKVLSSGKVKKKSTRMRHLNSHMSSKTKRQL) shows a compositional bias: basic residues. The interval 1–45 (MKMRTHSGAKKRLKVLSSGKVKKKSTRMRHLNSHMSSKTKRQLGK) is disordered.

It belongs to the bacterial ribosomal protein bL35 family.

The protein is Large ribosomal subunit protein bL35 of Bdellovibrio bacteriovorus (strain ATCC 15356 / DSM 50701 / NCIMB 9529 / HD100).